The following is a 193-amino-acid chain: 2',3'-cyclic-nucleotide 3'-phosphodiesterase (193 aa).

H40 functions as the Proton donor/acceptor in the catalytic mechanism. A substrate-binding site is contributed by T42. The active-site Proton donor/acceptor is H129. Positions 131 and 134 each coordinate substrate.

This sequence belongs to the 2H phosphoesterase superfamily. CPD1 family.

The protein localises to the golgi apparatus. The catalysed reaction is a nucleoside 2',3'-cyclic phosphate + H2O = a nucleoside 2'-phosphate + H(+). Functionally, involved in the metabolism of ADP-ribose 1',2'-cyclic phosphate which is produced as a consequence of tRNA splicing. The polypeptide is 2',3'-cyclic-nucleotide 3'-phosphodiesterase (CPD1) (Phaeosphaeria nodorum (strain SN15 / ATCC MYA-4574 / FGSC 10173) (Glume blotch fungus)).